A 203-amino-acid chain; its full sequence is Elongation factor Ts (203 aa).

Residues 80–83 (TDFV) form an involved in Mg(2+) ion dislocation from EF-Tu region.

Belongs to the EF-Ts family.

The protein localises to the cytoplasm. Its function is as follows. Associates with the EF-Tu.GDP complex and induces the exchange of GDP to GTP. It remains bound to the aminoacyl-tRNA.EF-Tu.GTP complex up to the GTP hydrolysis stage on the ribosome. This chain is Elongation factor Ts, found in Moorella thermoacetica (strain ATCC 39073 / JCM 9320).